A 624-amino-acid chain; its full sequence is Chaperone protein HtpG (624 aa).

The interval 1–336 is a; substrate-binding; the sequence is MKGQETRGFQ…SNDLPLNVSR (336 aa). The interval 337 to 552 is b; that stretch reads EILQDSSVTR…ADEMSTQMAK (216 aa). Positions 553-624 are c; that stretch reads LFAAAGQAAP…IRRMNQLLAS (72 aa).

It belongs to the heat shock protein 90 family. As to quaternary structure, homodimer.

The protein resides in the cytoplasm. In terms of biological role, molecular chaperone. Has ATPase activity. The protein is Chaperone protein HtpG of Klebsiella pneumoniae subsp. pneumoniae (strain ATCC 700721 / MGH 78578).